The following is a 297-amino-acid chain: Transmembrane protein 169 (297 aa).

Residues 1–88 form a disordered region; sequence MEESAPVESQ…EGEDFLDYPG (88 aa). Residues 1 to 159 are Extracellular-facing; that stretch reads MEESAPVESQ…CQVGADQGPH (159 aa). The span at 22–31 shows a compositional bias: low complexity; that stretch reads RRAVAAVLAL. 2 stretches are compositionally biased toward acidic residues: residues 61 to 70 and 78 to 88; these read KTDEEPEESE and EEGEDFLDYPG. Residues 160 to 180 traverse the membrane as a helical segment; it reads VVLWTLVCLPVVFVLSFVVSF. The Cytoplasmic portion of the chain corresponds to 181–210; it reads YYGTITWYNIFLVYNEERTFWHKISCCPCL. A helical membrane pass occupies residues 211-231; the sequence is ILFYPVLIMTMASSLGLYAAV. Residues 232–297 lie on the Extracellular side of the membrane; the sequence is AQLSWSWAAW…PIQEVETSTV (66 aa).

It is found in the membrane. In Mus musculus (Mouse), this protein is Transmembrane protein 169 (Tmem169).